The chain runs to 344 residues: Putative cyclin-Y-like protein 3 (344 aa).

The Cyclin N-terminal domain occupies 40-170 (ERYANRSLAI…FLELLEFNIH (131 aa)).

The protein belongs to the cyclin family. Cyclin Y subfamily.

This is Putative cyclin-Y-like protein 3 (CCNYL3) from Homo sapiens (Human).